Here is a 236-residue protein sequence, read N- to C-terminus: UPF0257 lipoprotein YnfC (236 aa).

The first 16 residues, 1–16 (MKYKLLPCLLAILLTG), serve as a signal peptide directing secretion. The N-palmitoyl cysteine moiety is linked to residue C17. C17 is lipidated: S-diacylglycerol cysteine.

The protein belongs to the UPF0257 family.

The protein resides in the cell membrane. This is UPF0257 lipoprotein YnfC from Escherichia coli O45:K1 (strain S88 / ExPEC).